The following is a 141-amino-acid chain: Hemoglobin subunit alpha-D (141 aa).

In terms of domain architecture, Globin spans 1–141; sequence MLSADEKQLI…VSDVLAEKYR (141 aa). Heme b-binding residues include His58 and His87.

The protein belongs to the globin family. In terms of assembly, heterotetramer of two alpha-D chains and two beta chains. In terms of tissue distribution, red blood cells.

Functionally, involved in oxygen transport from the lung to the various peripheral tissues. The polypeptide is Hemoglobin subunit alpha-D (HBAD) (Phrynops hilarii (Snake-necked turtle)).